We begin with the raw amino-acid sequence, 69 residues long: Cytochrome c oxidase subunit 8A, mitochondrial (69 aa).

A mitochondrion-targeting transit peptide spans 1-25 (MSVLTPLLLRGLTGPARRLPVPRAQ). An SIFI-degron motif is present at residues 2–19 (SVLTPLLLRGLTGPARRL). Residues 26-36 (IHSKPPREQLG) lie on the Mitochondrial matrix side of the membrane. Residues 37-60 (TMDIAIGLTSCFLCFLLPSGWVLS) form a helical membrane-spanning segment. Over 61–69 (HMENYKKRE) the chain is Mitochondrial intermembrane.

It belongs to the cytochrome c oxidase VIII family. In terms of assembly, component of the cytochrome c oxidase (complex IV, CIV), a multisubunit enzyme composed of 14 subunits. The complex is composed of a catalytic core of 3 subunits MT-CO1, MT-CO2 and MT-CO3, encoded in the mitochondrial DNA, and 11 supernumerary subunits COX4I1 (or COX4I2), COX5A, COX5B, COX6A2 (or COX6A1), COX6B1 (or COX6B2), COX6C, COX7A1 (or COX7A2), COX7B, COX7C, COX8B and NDUFA4, which are encoded in the nuclear genome. The complex exists as a monomer or a dimer and forms supercomplexes (SCs) in the inner mitochondrial membrane with NADH-ubiquinone oxidoreductase (complex I, CI) and ubiquinol-cytochrome c oxidoreductase (cytochrome b-c1 complex, complex III, CIII), resulting in different assemblies (supercomplex SCI(1)III(2)IV(1) and megacomplex MCI(2)III(2)IV(2)). In response to mitochondrial stress, the precursor protein is ubiquitinated by the SIFI complex in the cytoplasm before mitochondrial import, leading to its degradation. Within the SIFI complex, UBR4 initiates ubiquitin chain that are further elongated or branched by KCMF1.

It is found in the mitochondrion inner membrane. The protein operates within energy metabolism; oxidative phosphorylation. Functionally, component of the cytochrome c oxidase, the last enzyme in the mitochondrial electron transport chain which drives oxidative phosphorylation. The respiratory chain contains 3 multisubunit complexes succinate dehydrogenase (complex II, CII), ubiquinol-cytochrome c oxidoreductase (cytochrome b-c1 complex, complex III, CIII) and cytochrome c oxidase (complex IV, CIV), that cooperate to transfer electrons derived from NADH and succinate to molecular oxygen, creating an electrochemical gradient over the inner membrane that drives transmembrane transport and the ATP synthase. Cytochrome c oxidase is the component of the respiratory chain that catalyzes the reduction of oxygen to water. Electrons originating from reduced cytochrome c in the intermembrane space (IMS) are transferred via the dinuclear copper A center (CU(A)) of subunit 2 and heme A of subunit 1 to the active site in subunit 1, a binuclear center (BNC) formed by heme A3 and copper B (CU(B)). The BNC reduces molecular oxygen to 2 water molecules using 4 electrons from cytochrome c in the IMS and 4 protons from the mitochondrial matrix. This Bos taurus (Bovine) protein is Cytochrome c oxidase subunit 8A, mitochondrial (COX8A).